The chain runs to 404 residues: Phospho-N-acetylmuramoyl-pentapeptide-transferase (404 aa).

10 helical membrane passes run 30 to 50 (SAAI…IIFF), 73 to 93 (IPTM…LLFA), 100 to 120 (IMLL…DDYI), 132 to 152 (GKFK…TLIF), 209 to 229 (YMWI…SNGA), 242 to 262 (TSAI…NVIF), 274 to 294 (LAEL…FLWY), 301 to 321 (IFMG…LAIV), 326 to 346 (LMIP…IIQV), and 381 to 401 (KIVT…LVTL).

This sequence belongs to the glycosyltransferase 4 family. MraY subfamily. Mg(2+) is required as a cofactor.

The protein resides in the cell inner membrane. It carries out the reaction UDP-N-acetyl-alpha-D-muramoyl-L-alanyl-gamma-D-glutamyl-meso-2,6-diaminopimeloyl-D-alanyl-D-alanine + di-trans,octa-cis-undecaprenyl phosphate = di-trans,octa-cis-undecaprenyl diphospho-N-acetyl-alpha-D-muramoyl-L-alanyl-D-glutamyl-meso-2,6-diaminopimeloyl-D-alanyl-D-alanine + UMP. Its pathway is cell wall biogenesis; peptidoglycan biosynthesis. Catalyzes the initial step of the lipid cycle reactions in the biosynthesis of the cell wall peptidoglycan: transfers peptidoglycan precursor phospho-MurNAc-pentapeptide from UDP-MurNAc-pentapeptide onto the lipid carrier undecaprenyl phosphate, yielding undecaprenyl-pyrophosphoryl-MurNAc-pentapeptide, known as lipid I. The sequence is that of Phospho-N-acetylmuramoyl-pentapeptide-transferase from Amoebophilus asiaticus (strain 5a2).